The sequence spans 556 residues: Formate--tetrahydrofolate ligase (556 aa).

65–72 (TPAGEGKT) is an ATP binding site.

The protein belongs to the formate--tetrahydrofolate ligase family.

It carries out the reaction (6S)-5,6,7,8-tetrahydrofolate + formate + ATP = (6R)-10-formyltetrahydrofolate + ADP + phosphate. It participates in one-carbon metabolism; tetrahydrofolate interconversion. In Peptoclostridium acidaminophilum (Eubacterium acidaminophilum), this protein is Formate--tetrahydrofolate ligase.